We begin with the raw amino-acid sequence, 117 residues long: Ribosome-binding factor A (117 aa).

It belongs to the RbfA family. As to quaternary structure, monomer. Binds 30S ribosomal subunits, but not 50S ribosomal subunits or 70S ribosomes.

It is found in the cytoplasm. One of several proteins that assist in the late maturation steps of the functional core of the 30S ribosomal subunit. Associates with free 30S ribosomal subunits (but not with 30S subunits that are part of 70S ribosomes or polysomes). Required for efficient processing of 16S rRNA. May interact with the 5'-terminal helix region of 16S rRNA. The sequence is that of Ribosome-binding factor A from Streptococcus suis (strain 98HAH33).